Reading from the N-terminus, the 177-residue chain is Large ribosomal subunit protein uL6 (177 aa).

Belongs to the universal ribosomal protein uL6 family. As to quaternary structure, part of the 50S ribosomal subunit.

Its function is as follows. This protein binds to the 23S rRNA, and is important in its secondary structure. It is located near the subunit interface in the base of the L7/L12 stalk, and near the tRNA binding site of the peptidyltransferase center. The sequence is that of Large ribosomal subunit protein uL6 from Methanothermobacter thermautotrophicus (strain ATCC 29096 / DSM 1053 / JCM 10044 / NBRC 100330 / Delta H) (Methanobacterium thermoautotrophicum).